We begin with the raw amino-acid sequence, 187 residues long: Peroxisome assembly protein 22 (187 aa).

Residues 7 to 29 (NTFFGLAALGALGLGYSVYKSFI) form a helical membrane-spanning segment.

This sequence belongs to the peroxin-22 family. Interacts with PEX4.

The protein localises to the peroxisome membrane. Functionally, involved in peroxisome biogenesis. The chain is Peroxisome assembly protein 22 (PEX22) from Komagataella pastoris (Yeast).